The chain runs to 345 residues: Matrix protein (345 aa).

Residues 148-185 are disordered; that stretch reads KKKSKAKSAEGPSASTEDIKDSDTKGNQDIGDNGDLNS. The segment covering 164 to 173 has biased composition (basic and acidic residues); the sequence is EDIKDSDTKG.

Its subcellular location is the virion. In Aphis (Hairy beggarticks), this protein is Matrix protein (M2).